The following is a 249-amino-acid chain: Metallo-beta-lactamase type 2 (249 aa).

Positions 1 to 22 (MLKRLKGLLVLALGFTGLQVFG) are cleaved as a signal peptide. Residues H98, H100, D102, H161, and C180 each coordinate Zn(2+). K183 provides a ligand contact to substrate. H222 lines the Zn(2+) pocket.

This sequence belongs to the metallo-beta-lactamase superfamily. Class-B beta-lactamase family. In terms of assembly, monomer. It depends on Zn(2+) as a cofactor.

The protein resides in the periplasm. The catalysed reaction is a beta-lactam + H2O = a substituted beta-amino acid. Confers resistance to the different beta-lactams antibiotics (penicillin, cephalosporin and carbapenem) via the hydrolysis of the beta-lactam ring. The chain is Metallo-beta-lactamase type 2 (blaB5) from Elizabethkingia meningoseptica (Chryseobacterium meningosepticum).